The primary structure comprises 169 residues: ATP synthase subunit b (169 aa).

A helical transmembrane segment spans residues 12–32 (HIYLGNAIWYLLCFAILMLLI).

This sequence belongs to the ATPase B chain family. As to quaternary structure, F-type ATPases have 2 components, F(1) - the catalytic core - and F(0) - the membrane proton channel. F(1) has five subunits: alpha(3), beta(3), gamma(1), delta(1), epsilon(1). F(0) has three main subunits: a(1), b(2) and c(10-14). The alpha and beta chains form an alternating ring which encloses part of the gamma chain. F(1) is attached to F(0) by a central stalk formed by the gamma and epsilon chains, while a peripheral stalk is formed by the delta and b chains.

The protein resides in the cell membrane. Increases 2-fold following exposure to low pH. F(1)F(0) ATP synthase produces ATP from ADP in the presence of a proton or sodium gradient. F-type ATPases consist of two structural domains, F(1) containing the extramembraneous catalytic core and F(0) containing the membrane proton channel, linked together by a central stalk and a peripheral stalk. During catalysis, ATP synthesis in the catalytic domain of F(1) is coupled via a rotary mechanism of the central stalk subunits to proton translocation. Functionally, component of the F(0) channel, it forms part of the peripheral stalk, linking F(1) to F(0). In Lactobacillus acidophilus (strain ATCC 700396 / NCK56 / N2 / NCFM), this protein is ATP synthase subunit b.